We begin with the raw amino-acid sequence, 879 residues long: MITANEIRRRFLEFYKAHGHEAVRSSSLVPKDDPSLLFTNAGMVQFKKIFLGQEKRAYSRATTSQKCLRVGGKHNDLENVGRTARHHTFFEMLGNFSFGDYFKEDAIKFAWKFLTEELKLPKERLYATVFRDDDEAEQLWLKHSDIPAERIYRMGEKDNFWSMGDTGPCGPCSEILIDQGEHMTCGPDCGIGKCDCDRFLEIWNLVFMQYDQDATGKREPLPKPSIDTGMGLERITAVCQGVFSNFDTDIFQAIIQYTCGLANVSYRSDDETDTALRVIADHSRAIAFMITDGILPSNEGRGYVLRRLIRRAYRFGRLIGLTDTFLHKTALKVVDIMGDDYPELRENSDFMARVVREEEDRFNRTLDKGLSMLEDELATLSASGAAHVPGDIAFRLYDTFGFPLDIVNDIAEKRGFSVDEDGFKALMKEQKERAKAAWKGSGEKDIASRFQPLLEEGMRSEFIGYDHLCGEGRIVALMDEHALAVERLAAGQKGYLVTNRTPFYGASGGQSGDIGTIASPSGKVRVVDTIKPSPELVVHHVEAVEGDILLDQEVDLTVTEDDRVASARNHTCTHLLHAALRRVLGDHVKQAGSLVAPDRLRFDFTHIAPMTPEELAAVEREVNRVIMADIPLETDHMHYDDAVKRGAMALFGEKYGDEVRVVAIADESVELCGGTHLRATGQAGLFLIVSESGVAAGVRRIEALTGWNAMHAVLAQRSEQAQLSAMLKARPGEIVSRVESLQKENRTLRKDMERAAAQATSGQGRNIMDEATDVAGVKLLAAKVEVPNVKALRDLMDDVRSKLVSGIACLAAVDGDKVQLIIAVSKDLQTRFTAPQLIKDVAAEVGGSGGGRPDMAQAGGTNPAGIDAAFAKLRSLIGG.

Residues histidine 570, histidine 574, cysteine 672, and histidine 676 each coordinate Zn(2+).

The protein belongs to the class-II aminoacyl-tRNA synthetase family. Zn(2+) serves as cofactor.

The protein localises to the cytoplasm. It carries out the reaction tRNA(Ala) + L-alanine + ATP = L-alanyl-tRNA(Ala) + AMP + diphosphate. Its function is as follows. Catalyzes the attachment of alanine to tRNA(Ala) in a two-step reaction: alanine is first activated by ATP to form Ala-AMP and then transferred to the acceptor end of tRNA(Ala). Also edits incorrectly charged Ser-tRNA(Ala) and Gly-tRNA(Ala) via its editing domain. The sequence is that of Alanine--tRNA ligase from Nitratidesulfovibrio vulgaris (strain ATCC 29579 / DSM 644 / CCUG 34227 / NCIMB 8303 / VKM B-1760 / Hildenborough) (Desulfovibrio vulgaris).